Consider the following 471-residue polypeptide: UDP-N-acetylmuramate--L-alanine ligase (471 aa).

114-120 (GTHGKTT) contributes to the ATP binding site.

Belongs to the MurCDEF family.

The protein resides in the cytoplasm. It catalyses the reaction UDP-N-acetyl-alpha-D-muramate + L-alanine + ATP = UDP-N-acetyl-alpha-D-muramoyl-L-alanine + ADP + phosphate + H(+). The protein operates within cell wall biogenesis; peptidoglycan biosynthesis. Cell wall formation. This Agrobacterium fabrum (strain C58 / ATCC 33970) (Agrobacterium tumefaciens (strain C58)) protein is UDP-N-acetylmuramate--L-alanine ligase.